The following is a 230-amino-acid chain: Interleukin-22 receptor subunit alpha-2 (230 aa).

An N-terminal signal peptide occupies residues 1–20; the sequence is MMPKHCLLGLLIILLSSATE. 2 consecutive Fibronectin type-III domains span residues 29–128 and 129–230; these read TPQK…TKLD and PPVV…VHIP. 2 disulfides stabilise this stretch: Cys77-Cys85 and Cys205-Cys226.

It belongs to the type II cytokine receptor family. In terms of tissue distribution, highly expressed in lymph nodes and at lower levels in lung, spleen, and thymus. Not expressed in kidney, liver and heart.

Its subcellular location is the secreted. Its function is as follows. Receptor for IL22. Binds to IL22, prevents interaction with the functional IL-22R complex and blocks the activity of IL22 (in vitro). May play an important role as an IL22 antagonist in the regulation of inflammatory responses. This chain is Interleukin-22 receptor subunit alpha-2 (Il22ra2), found in Mus musculus (Mouse).